The chain runs to 68 residues: Large ribosomal subunit protein bL32 (68 aa).

Residues 1-20 are disordered; sequence MAVPQNRVTRSRRNMRRSHD.

The protein belongs to the bacterial ribosomal protein bL32 family.

The protein is Large ribosomal subunit protein bL32 of Cereibacter sphaeroides (strain ATCC 17029 / ATH 2.4.9) (Rhodobacter sphaeroides).